We begin with the raw amino-acid sequence, 588 residues long: Nucleoporin ndc-1 (588 aa).

The span at Met1–Thr12 shows a compositional bias: polar residues. The tract at residues Met1–Val55 is disordered. Residues Met1 to Arg79 are Cytoplasmic-facing. Low complexity predominate over residues Pro31–Arg48. Residues Leu80–Leu100 traverse the membrane as a helical segment. Residues Lys101–Asn122 are Perinuclear space-facing. A helical transmembrane segment spans residues Ala123–Ile143. Topologically, residues Lys144–Thr159 are cytoplasmic. A helical membrane pass occupies residues Phe160 to Phe180. Residues Cys181–Glu190 are Perinuclear space-facing. A helical transmembrane segment spans residues Phe191–Ser211. Topologically, residues Asp212–Ala255 are cytoplasmic. A helical transmembrane segment spans residues Val256–Leu276. Residue Asn277 is a topological domain, perinuclear space. The helical transmembrane segment at Ile278–Ser298 threads the bilayer. The Cytoplasmic portion of the chain corresponds to Met299–Leu588.

The protein belongs to the NDC1 family.

The protein localises to the nucleus. It localises to the nuclear pore complex. It is found in the nucleus membrane. In terms of biological role, component of the nuclear pore complex (NPC), which plays a key role in de novo assembly and insertion of NPC in the nuclear envelope. Plays a role in postmitotic nuclear pore complex assembly potentially by promoting localization of nuclear pore complex proteins to the nuclear rim. The sequence is that of Nucleoporin ndc-1 from Caenorhabditis elegans.